We begin with the raw amino-acid sequence, 666 residues long: Protein-arginine deiminase type-4 (666 aa).

Residues N153, D155, D165, D168, D176, and D179 each coordinate Ca(2+). R212 and R218 each carry citrulline. Q349 is a binding site for Ca(2+). Residue D350 is part of the active site. Residues E351, E353, D369, and S370 each coordinate Ca(2+). 3 positions are modified to citrulline: R372, R374, and R383. Residue R374 coordinates substrate. The Ca(2+) site is built by F407, L410, and E411. Residues H471, D473, and C648 contribute to the active site.

This sequence belongs to the protein arginine deiminase family. Ca(2+) is required as a cofactor. Post-translationally, autocitrullination at Arg-372 and Arg-374 inactivates the enzyme. As to expression, epidermis.

It is found in the cytoplasm. The protein localises to the nucleus. Its subcellular location is the cytoplasmic granule. The catalysed reaction is L-arginyl-[protein] + H2O = L-citrullyl-[protein] + NH4(+). Functionally, catalyzes the citrullination/deimination of arginine residues of proteins such as histones, thereby playing a key role in histone code and regulation of stem cell maintenance. Citrullinates histone H1 at 'Arg-54' (to form H1R54ci), histone H3 at 'Arg-2', 'Arg-8', 'Arg-17' and/or 'Arg-26' (to form H3R2ci, H3R8ci, H3R17ci, H3R26ci, respectively) and histone H4 at 'Arg-3' (to form H4R3ci). Acts as a key regulator of stem cell maintenance by mediating citrullination of histone H1: citrullination of 'Arg-54' of histone H1 (H1R54ci) results in H1 displacement from chromatin and global chromatin decondensation, thereby promoting pluripotency and stem cell maintenance. Promotes profound chromatin decondensation during the innate immune response to infection in neutrophils by mediating formation of H1R54ci. Required for the formation of neutrophil extracellular traps (NETs); NETs are mainly composed of DNA fibers and are released by neutrophils to bind pathogens during inflammation. Citrullination of histone H3 prevents their methylation by CARM1 and HRMT1L2/PRMT1 and represses transcription. Citrullinates EP300/P300 at 'Arg-2142', which favors its interaction with NCOA2/GRIP1. This is Protein-arginine deiminase type-4 (Padi4) from Rattus norvegicus (Rat).